We begin with the raw amino-acid sequence, 59 residues long: Potassium channel toxin alpha-KTx 1.12 (59 aa).

Residues M1–A22 form the signal peptide. Position 23 is a pyrrolidone carboxylic acid (Q23). Cystine bridges form between C29-C50, C35-C55, and C39-C57. The interval G48–C55 is interaction with Ca(2+)-activated K(+) channels.

This sequence belongs to the short scorpion toxin superfamily. Potassium channel inhibitor family. Alpha-KTx 01 subfamily. Expressed by the venom gland.

Its subcellular location is the secreted. Its function is as follows. Potent selective inhibitor of high conductance (maxi-K), different medium and small conductance calcium-activated potassium channels (KCa1.1/KCNMA1 and others), as well as a voltage-dependent potassium channel (Kv1.3/KCNA3&gt;Kv1.2/KCNA2&gt;Kv1.6/KCNA3&gt;&gt;Shaker/Sh). It blocks channel activity by a simple bimolecular inhibition process. Has a pH-specific antimicrobial activity against bacteria (B.subtilis, E.coli and S.aureus) and the fungus C.albicans. The sequence is that of Potassium channel toxin alpha-KTx 1.12 from Leiurus hebraeus (Hebrew deathstalker scorpion).